Consider the following 645-residue polypeptide: ATP-dependent zinc metalloprotease FtsH (645 aa).

The Cytoplasmic portion of the chain corresponds to 1-6; it reads MDQRPK. Residues 7–27 form a helical membrane-spanning segment; that stretch reads FGMILFYIVLGVFLMVALRGL. Topologically, residues 28–110 are periplasmic; it reads YTTDTNLSVP…VVYEKGNDSL (83 aa). The helical transmembrane segment at 111 to 131 threads the bilayer; that stretch reads FWVNLLGTIIPLAIIVFIWFF. The Cytoplasmic portion of the chain corresponds to 132 to 645; sequence AMRSLSGRNS…AKEGNEDEKN (514 aa). 204–211 is a binding site for ATP; it reads GPPGTGKT. Position 426 (His426) interacts with Zn(2+). The active site involves Glu427. His430 and Asp503 together coordinate Zn(2+). The segment at 623 to 645 is disordered; that stretch reads SKRKVSAVSTNEEAKEGNEDEKN. A compositionally biased stretch (basic and acidic residues) spans 634-645; it reads EEAKEGNEDEKN.

It in the central section; belongs to the AAA ATPase family. This sequence in the C-terminal section; belongs to the peptidase M41 family. In terms of assembly, homohexamer. The cofactor is Zn(2+).

Its subcellular location is the cell inner membrane. Functionally, acts as a processive, ATP-dependent zinc metallopeptidase for both cytoplasmic and membrane proteins. Plays a role in the quality control of integral membrane proteins. The sequence is that of ATP-dependent zinc metalloprotease FtsH from Kosmotoga olearia (strain ATCC BAA-1733 / DSM 21960 / TBF 19.5.1).